The following is a 190-amino-acid chain: Probable thymidylate kinase (190 aa).

An ATP-binding site is contributed by 9–16; it reads GIDGAGKT.

Belongs to the thymidylate kinase family.

The enzyme catalyses dTMP + ATP = dTDP + ADP. The polypeptide is Probable thymidylate kinase (tmk1) (Sulfurisphaera tokodaii (strain DSM 16993 / JCM 10545 / NBRC 100140 / 7) (Sulfolobus tokodaii)).